Reading from the N-terminus, the 89-residue chain is UPF0223 protein BcerKBAB4_3787 (89 aa).

This sequence belongs to the UPF0223 family.

The chain is UPF0223 protein BcerKBAB4_3787 from Bacillus mycoides (strain KBAB4) (Bacillus weihenstephanensis).